The following is a 37-amino-acid chain: NADH dehydrogenase [ubiquinone] 1 alpha subcomplex subunit 5 (37 aa).

The protein belongs to the complex I NDUFA5 subunit family. In terms of assembly, complex I is composed of about 45 different subunits.

The protein resides in the mitochondrion inner membrane. In terms of biological role, accessory subunit of the mitochondrial membrane respiratory chain NADH dehydrogenase (Complex I), that is believed not to be involved in catalysis. Complex I functions in the transfer of electrons from NADH to the respiratory chain. The immediate electron acceptor for the enzyme is believed to be ubiquinone. The sequence is that of NADH dehydrogenase [ubiquinone] 1 alpha subcomplex subunit 5 from Solanum tuberosum (Potato).